The primary structure comprises 83 residues: Small ribosomal subunit protein bS16 (83 aa).

The protein belongs to the bacterial ribosomal protein bS16 family.

The protein is Small ribosomal subunit protein bS16 of Pseudomonas fluorescens (strain ATCC BAA-477 / NRRL B-23932 / Pf-5).